We begin with the raw amino-acid sequence, 164 residues long: V-type proton ATPase 16 kDa proteolipid subunit (164 aa).

The Lumenal portion of the chain corresponds to 1 to 9 (MASFSGDET). Residues 10–32 (APFFGFLGAAAALVFSCMGAAYG) traverse the membrane as a helical segment. Residues 33–54 (TAKSGVGVASMGVMRPELVMKS) are Cytoplasmic-facing. Residues 55–75 (IVPVVMAGVLGIYGLIIAVII) form a helical membrane-spanning segment. The Lumenal segment spans residues 76–94 (STGINPKAKSYYLFDGYAH). The chain crosses the membrane as a helical span at residues 95–116 (LSSGLACGLAGLSAGMAIGIVG). Residues 117 to 128 (DAGVRANAQQPK) lie on the Cytoplasmic side of the membrane. Residues 129–154 (LFVGMILILIFAEALALYGLIVGIIL) traverse the membrane as a helical segment. Topologically, residues 155-164 (SSRAGQSRAD) are lumenal.

It belongs to the V-ATPase proteolipid subunit family. In terms of assembly, V-ATPase is a heteromultimeric enzyme composed of a peripheral catalytic V1 complex (main components: subunits A, B, C, D, E, and F) attached to an integral membrane V0 proton pore complex (main component: the proteolipid protein; which is present as a hexamer that forms the proton-conducting pore).

The protein resides in the vacuole membrane. In terms of biological role, proton-conducting pore forming subunit of the membrane integral V0 complex of vacuolar ATPase. V-ATPase is responsible for acidifying a variety of intracellular compartments in eukaryotic cells. This is V-type proton ATPase 16 kDa proteolipid subunit from Vigna radiata var. radiata (Mung bean).